A 164-amino-acid polypeptide reads, in one-letter code: Diphosphoinositol polyphosphate phosphohydrolase 3-beta (164 aa).

Residues Arg9, Lys17–Arg19, and Ser38–Arg40 contribute to the substrate site. One can recognise a Nudix hydrolase domain in the interval Lys17–Lys144. Gly49 and Glu65 together coordinate Mg(2+). The Nudix box motif lies at Gly50–Gly71. Glu68 (proton acceptor) is an active-site residue. Glu69 serves as a coordination point for Mg(2+). Substrate contacts are provided by residues Arg89–His91, Arg115, and Lys133. Residues Lys144 to Pro164 form a disordered region. The segment covering Ser148 to Pro164 has biased composition (polar residues).

Belongs to the Nudix hydrolase family. DIPP subfamily. Mg(2+) is required as a cofactor. It depends on Mn(2+) as a cofactor. In terms of tissue distribution, mainly expressed in testis and, at lower level in brain. According to PubMed:12121577, it is also expressed in pancreas and weakly expressed in thymus, prostate, ovary, lung, small intestine and heart.

Its subcellular location is the cytoplasm. The catalysed reaction is diphospho-myo-inositol polyphosphate + H2O = myo-inositol polyphosphate + phosphate.. The enzyme catalyses P(1),P(6)-bis(5'-adenosyl) hexaphosphate + H2O = adenosine 5'-pentaphosphate + AMP + 2 H(+). It catalyses the reaction P(1),P(5)-bis(5'-adenosyl) pentaphosphate + H2O = adenosine 5'-tetraphosphate + AMP + 2 H(+). Cleaves a beta-phosphate from the diphosphate groups in PP-InsP5 (diphosphoinositol pentakisphosphate), suggesting that it may play a role in signal transduction. Also able to catalyze the hydrolysis of dinucleoside oligophosphates, with Ap6A and Ap5A being the preferred substrates. The major reaction products are ADP and p4a from Ap6A and ADP and ATP from Ap5A. Also able to hydrolyze 5-phosphoribose 1-diphosphate. The polypeptide is Diphosphoinositol polyphosphate phosphohydrolase 3-beta (Homo sapiens (Human)).